The chain runs to 279 residues: Putative E3 ubiquitin-protein ligase C36B7.05c (279 aa).

The segment at 27–122 adopts an FYVE-type zinc-finger fold; sequence DDESAQCNNC…VCVNCRQQLS (96 aa). Positions 33, 36, 49, 52, 57, 60, 114, and 117 each coordinate Zn(2+). Serine 200 carries the phosphoserine modification. An RING-type; atypical zinc finger spans residues 230 to 273; sequence CIICFEEFAAGDRVARIEYCLCIFHLKCYRDWLSTGAAGCPVHA.

The protein localises to the cytoplasm. It is found in the nucleus. It localises to the endosome membrane. The protein resides in the vacuole membrane. It carries out the reaction S-ubiquitinyl-[E2 ubiquitin-conjugating enzyme]-L-cysteine + [acceptor protein]-L-lysine = [E2 ubiquitin-conjugating enzyme]-L-cysteine + N(6)-ubiquitinyl-[acceptor protein]-L-lysine.. It functions in the pathway protein modification; protein ubiquitination. Its function is as follows. Functions as an E3 ubiquitin-protein ligase. Binds phospholipid vesicles containing phosphatidylinositol 3-phosphate. The polypeptide is Putative E3 ubiquitin-protein ligase C36B7.05c (Schizosaccharomyces pombe (strain 972 / ATCC 24843) (Fission yeast)).